A 273-amino-acid polypeptide reads, in one-letter code: Large ribosomal subunit protein uL2 (273 aa).

Residues 221–262 (RGTAMNPVDHPHGGGEGRNFGKHPVTPWGVQTKGKKTRHNKR) are disordered. Basic residues predominate over residues 253–262 (KGKKTRHNKR).

The protein belongs to the universal ribosomal protein uL2 family. As to quaternary structure, part of the 50S ribosomal subunit. Forms a bridge to the 30S subunit in the 70S ribosome.

Its function is as follows. One of the primary rRNA binding proteins. Required for association of the 30S and 50S subunits to form the 70S ribosome, for tRNA binding and peptide bond formation. It has been suggested to have peptidyltransferase activity; this is somewhat controversial. Makes several contacts with the 16S rRNA in the 70S ribosome. The protein is Large ribosomal subunit protein uL2 of Aggregatibacter actinomycetemcomitans (Actinobacillus actinomycetemcomitans).